The following is a 213-amino-acid chain: Orotate phosphoribosyltransferase (213 aa).

Residue lysine 26 coordinates 5-phospho-alpha-D-ribose 1-diphosphate. An orotate-binding site is contributed by 34–35; it reads FF. 5-phospho-alpha-D-ribose 1-diphosphate is bound by residues 72 to 73, arginine 99, lysine 100, lysine 103, histidine 105, and 124 to 132; these read YK and DDVITAGTA. Positions 128 and 156 each coordinate orotate.

This sequence belongs to the purine/pyrimidine phosphoribosyltransferase family. PyrE subfamily. As to quaternary structure, homodimer. Mg(2+) serves as cofactor.

It catalyses the reaction orotidine 5'-phosphate + diphosphate = orotate + 5-phospho-alpha-D-ribose 1-diphosphate. The protein operates within pyrimidine metabolism; UMP biosynthesis via de novo pathway; UMP from orotate: step 1/2. Its function is as follows. Catalyzes the transfer of a ribosyl phosphate group from 5-phosphoribose 1-diphosphate to orotate, leading to the formation of orotidine monophosphate (OMP). This is Orotate phosphoribosyltransferase from Salmonella agona (strain SL483).